The following is a 259-amino-acid chain: Ribonuclease PH (259 aa).

Phosphate is bound by residues Arg-88 and 126–128; that span reads GTR.

This sequence belongs to the RNase PH family. In terms of assembly, homohexameric ring arranged as a trimer of dimers.

The catalysed reaction is tRNA(n+1) + phosphate = tRNA(n) + a ribonucleoside 5'-diphosphate. In terms of biological role, phosphorolytic 3'-5' exoribonuclease that plays an important role in tRNA 3'-end maturation. Removes nucleotide residues following the 3'-CCA terminus of tRNAs; can also add nucleotides to the ends of RNA molecules by using nucleoside diphosphates as substrates, but this may not be physiologically important. Probably plays a role in initiation of 16S rRNA degradation (leading to ribosome degradation) during starvation. The chain is Ribonuclease PH from Mycolicibacterium paratuberculosis (strain ATCC BAA-968 / K-10) (Mycobacterium paratuberculosis).